Here is a 648-residue protein sequence, read N- to C-terminus: Indolepyruvate oxidoreductase subunit IorA (648 aa).

4Fe-4S ferredoxin-type domains are found at residues 585-614 (PIYQ…WDPE) and 616-645 (KKAK…KVRE). [4Fe-4S] cluster is bound by residues C594, C597, C600, C606, C625, C628, C631, and C635.

As to quaternary structure, heterodimer of the IorA and IorB subunits. The cofactor is [4Fe-4S] cluster.

The catalysed reaction is indole-3-pyruvate + 2 oxidized [2Fe-2S]-[ferredoxin] + CoA = (indol-3-yl)acetyl-CoA + 2 reduced [2Fe-2S]-[ferredoxin] + CO2 + H(+). In terms of biological role, catalyzes the ferredoxin-dependent oxidative decarboxylation of arylpyruvates. This chain is Indolepyruvate oxidoreductase subunit IorA (iorA), found in Pyrococcus abyssi (strain GE5 / Orsay).